We begin with the raw amino-acid sequence, 247 residues long: 3-oxoacyl-[acyl-carrier-protein] reductase (247 aa).

11 to 35 (VTGASRGIGKATALALAATGMKVVV) lines the NADP(+) pocket. Ser143 serves as a coordination point for substrate. Tyr156 (proton acceptor) is an active-site residue.

Belongs to the short-chain dehydrogenases/reductases (SDR) family.

It catalyses the reaction a (3R)-hydroxyacyl-[ACP] + NADP(+) = a 3-oxoacyl-[ACP] + NADPH + H(+). It functions in the pathway lipid metabolism; fatty acid biosynthesis. Functionally, catalyzes the NADPH-dependent reduction of beta-ketoacyl-ACP substrates to beta-hydroxyacyl-ACP products, the first reductive step in the elongation cycle of fatty acid biosynthesis. Is capable of reducing acetoacetyl-CoA, but less well than its paralog PhaB. The sequence is that of 3-oxoacyl-[acyl-carrier-protein] reductase (fabG) from Synechocystis sp. (strain ATCC 27184 / PCC 6803 / Kazusa).